A 255-amino-acid polypeptide reads, in one-letter code: uncharacterized protein (255 aa).

It belongs to the methyltransferase superfamily.

This is an uncharacterized protein from Mycobacterium ulcerans (strain Agy99).